The primary structure comprises 431 residues: 5-methylthioadenosine/S-adenosylhomocysteine deaminase (431 aa).

Positions 64 and 66 each coordinate Zn(2+). Positions 93, 145, and 183 each coordinate substrate. Histidine 210 is a binding site for Zn(2+). The substrate site is built by glutamate 213 and aspartate 299. Aspartate 299 contributes to the Zn(2+) binding site.

Belongs to the metallo-dependent hydrolases superfamily. MTA/SAH deaminase family. It depends on Zn(2+) as a cofactor.

The enzyme catalyses S-adenosyl-L-homocysteine + H2O + H(+) = S-inosyl-L-homocysteine + NH4(+). The catalysed reaction is S-methyl-5'-thioadenosine + H2O + H(+) = S-methyl-5'-thioinosine + NH4(+). Functionally, catalyzes the deamination of 5-methylthioadenosine and S-adenosyl-L-homocysteine into 5-methylthioinosine and S-inosyl-L-homocysteine, respectively. Is also able to deaminate adenosine. In Syntrophomonas wolfei subsp. wolfei (strain DSM 2245B / Goettingen), this protein is 5-methylthioadenosine/S-adenosylhomocysteine deaminase.